Here is a 1039-residue protein sequence, read N- to C-terminus: Beta-galactosidase (1039 aa).

Asn103 and Asp201 together coordinate substrate. Asp201 provides a ligand contact to Na(+). Mg(2+) is bound by residues Glu415, His417, and Glu460. Substrate-binding positions include Glu460 and 536-539 (EYAH). The active-site Proton donor is the Glu460. The active-site Nucleophile is the Glu536. Asn596 contacts Mg(2+). Phe600 and Asn603 together coordinate Na(+). Substrate-binding residues include Asn603 and Trp1012.

It belongs to the glycosyl hydrolase 2 family. As to quaternary structure, homotetramer. Requires Mg(2+) as cofactor. The cofactor is Na(+).

It carries out the reaction Hydrolysis of terminal non-reducing beta-D-galactose residues in beta-D-galactosides.. Its activity is regulated as follows. Inhibited by zinc, copper and nickel ions. Activated by 2-mercaptoethanol and inhibited by EDTA in vitro. This Pseudoalteromonas haloplanktis (Alteromonas haloplanktis) protein is Beta-galactosidase (lacZ).